Reading from the N-terminus, the 204-residue chain is Sec-independent protein translocase protein TatB (204 aa).

Residues Met-1–Gly-21 traverse the membrane as a helical segment. The segment covering Val-154–Ser-166 has biased composition (polar residues). A disordered region spans residues Val-154 to Ser-204.

Belongs to the TatB family. As to quaternary structure, the Tat system comprises two distinct complexes: a TatABC complex, containing multiple copies of TatA, TatB and TatC subunits, and a separate TatA complex, containing only TatA subunits. Substrates initially bind to the TatABC complex, which probably triggers association of the separate TatA complex to form the active translocon.

The protein localises to the cell inner membrane. Functionally, part of the twin-arginine translocation (Tat) system that transports large folded proteins containing a characteristic twin-arginine motif in their signal peptide across membranes. Together with TatC, TatB is part of a receptor directly interacting with Tat signal peptides. TatB may form an oligomeric binding site that transiently accommodates folded Tat precursor proteins before their translocation. In Mannheimia succiniciproducens (strain KCTC 0769BP / MBEL55E), this protein is Sec-independent protein translocase protein TatB.